A 386-amino-acid polypeptide reads, in one-letter code: Putrescine N-methyltransferase 4 (386 aa).

Composition is skewed to polar residues over residues 1 to 14 (MEVI…STIF), 23 to 48 (GHQS…GHHN), and 57 to 87 (HQNG…NGNE). The interval 1 to 87 (MEVISTNTNG…GTISHDNGNE (87 aa)) is disordered. The region spanning 97-334 (LGWFSEFSAL…GVIGYMLCST (238 aa)) is the PABS domain. Residues Gln-128, Glu-203, and 234-235 (DG) each bind S-adenosyl-L-methionine. Catalysis depends on Asp-253, which acts as the Proton acceptor. Tyr-322 is an S-adenosyl-L-methionine binding site.

The protein belongs to the class I-like SAM-binding methyltransferase superfamily. Putrescine methyltransferase family. In terms of tissue distribution, predominantly expressed in roots.

It carries out the reaction putrescine + S-adenosyl-L-methionine = N-methylputrescine + S-adenosyl-L-homocysteine + H(+). The protein operates within alkaloid biosynthesis; nicotine biosynthesis. Involved in the biosynthesis of pyridine alkaloid natural products, leading mainly to the production of anabasine, anatabine, nicotine and nornicotine, effective deterrents against herbivores with antiparasitic and pesticide properties (neurotoxins); nornicotine serves as the precursor in the synthesis of the carcinogen compound N'-nitrosonornicotine (NNN). Methyltransferase that mediates the conversion of putrescine to N-methylputrescine. Promotes leaves ripening. The polypeptide is Putrescine N-methyltransferase 4 (Nicotiana tabacum (Common tobacco)).